Consider the following 429-residue polypeptide: UDP-N-acetylglucosamine 1-carboxyvinyltransferase 2 (429 aa).

Residue 22-23 (KN) participates in phosphoenolpyruvate binding. UDP-N-acetyl-alpha-D-glucosamine is bound at residue Arg93. Cys117 functions as the Proton donor in the catalytic mechanism. Position 117 is a 2-(S-cysteinyl)pyruvic acid O-phosphothioketal (Cys117). UDP-N-acetyl-alpha-D-glucosamine contacts are provided by residues 122 to 126 (RPIDQ), Asp305, and Ile327.

Belongs to the EPSP synthase family. MurA subfamily.

The protein resides in the cytoplasm. The enzyme catalyses phosphoenolpyruvate + UDP-N-acetyl-alpha-D-glucosamine = UDP-N-acetyl-3-O-(1-carboxyvinyl)-alpha-D-glucosamine + phosphate. The protein operates within cell wall biogenesis; peptidoglycan biosynthesis. Functionally, cell wall formation. Adds enolpyruvyl to UDP-N-acetylglucosamine. In Bacillus anthracis, this protein is UDP-N-acetylglucosamine 1-carboxyvinyltransferase 2.